The primary structure comprises 65 residues: Large ribosomal subunit protein bL35 (65 aa).

The protein belongs to the bacterial ribosomal protein bL35 family.

This is Large ribosomal subunit protein bL35 from Thermoanaerobacter pseudethanolicus (strain ATCC 33223 / 39E) (Clostridium thermohydrosulfuricum).